Consider the following 524-residue polypeptide: Thermosome subunit 3 (524 aa).

Belongs to the TCP-1 chaperonin family. The thermosome or CCT complex is a oligomeric complex of two octameric double-ring structures; the complex is probably a heterooligomer of CCT1, CCT2 and CCT3 with yet unknown stoichiometry.

Functionally, molecular chaperone that assists in the folding or refolding of nascent or denatured proteins along with ATP hydrolysis. ATPase activity is highest in thermosome assemblies containing CCT1:CCT2, followed by assemblies containing CCT1:CCT2:CCT3. Not required for thermosome ATPase activity. Not required for growth. The chain is Thermosome subunit 3 (cct3) from Haloferax volcanii (strain ATCC 29605 / DSM 3757 / JCM 8879 / NBRC 14742 / NCIMB 2012 / VKM B-1768 / DS2) (Halobacterium volcanii).